Reading from the N-terminus, the 499-residue chain is Lysine--tRNA ligase (499 aa).

Residues E403 and E410 each coordinate Mg(2+).

The protein belongs to the class-II aminoacyl-tRNA synthetase family. Homodimer. Mg(2+) serves as cofactor.

Its subcellular location is the cytoplasm. The enzyme catalyses tRNA(Lys) + L-lysine + ATP = L-lysyl-tRNA(Lys) + AMP + diphosphate. This Campylobacter hominis (strain ATCC BAA-381 / DSM 21671 / CCUG 45161 / LMG 19568 / NCTC 13146 / CH001A) protein is Lysine--tRNA ligase.